Consider the following 1127-residue polypeptide: Disease resistance protein RPS6 (1127 aa).

Methionine 1 carries the post-translational modification N-acetylmethionine. Residues 12 to 176 (WSYHVFPSFS…EIANDILGKM (165 aa)) enclose the TIR domain. Residue glutamate 87 is part of the active site. An NB-ARC domain is found at 191-452 (EDHITKMSSL…HIACIFNGEK (262 aa)). LRR repeat units follow at residues 197–221 (MSSLLHLESEEVRMVGIWGPSGIGK), 540–563 (IDETDELHIHESSFKGMHNLLFLK), 587–609 (PSRLRLLRFDRYPSKCLPSNFHP), 610–632 (ENLVKLQMQQSKLEKLWDGVHSL), 633–656 (AGLRNMDLRGSRNLKEIPDLSMAT), 658–679 (LETLKLSSCSSLVELPSSIQYL), 680–704 (NKLNDLDMSYCDHLETIPSGVNLKS), 766–790 (SPTLTRLTFSNNPSFVEVPSSIQNL), 791–813 (YQLEHLEIMNCRNLVTLPTGINL), 814–834 (DSLISLDLSHCSQLKTFPDIS), and 835–857 (TNISDLNLSYTAIEEVPLSIEKL).

As to quaternary structure, interacts with EDS1. Ubiquitous.

The enzyme catalyses NAD(+) + H2O = ADP-D-ribose + nicotinamide + H(+). Disease resistance (R) protein that specifically recognizes the hopA1 type III effector avirulence protein from Pseudomonas syringae. Resistance proteins guard the plant against pathogens that contain an appropriate avirulence protein via an indirect interaction with this avirulence protein. That triggers a defense system including the hypersensitive response, which restricts the pathogen growth. The polypeptide is Disease resistance protein RPS6 (RPS6) (Arabidopsis thaliana (Mouse-ear cress)).